The chain runs to 413 residues: Metacaspase-1A (413 aa).

Positions 1–104 (MQNHHHQQSS…PTDPVAFGHG (104 aa)) are disordered. The segment covering 36 to 47 (SPQPGYGAPPPH) has biased composition (pro residues). Positions 49–58 (GYGQPPSGYG) are enriched in low complexity. Over residues 75-85 (GMNQYQNTYSH) the composition is skewed to polar residues. Residues His-204 and Cys-260 contribute to the active site.

Belongs to the peptidase C14B family.

Its function is as follows. Involved in cell death (apoptosis). Required for the apoptotic-like loss of membrane phospholipid asymmetry at stationary phase and facilitates growth under conditions of endoplasmic reticulum stress. In Aspergillus fumigatus (strain CBS 144.89 / FGSC A1163 / CEA10) (Neosartorya fumigata), this protein is Metacaspase-1A (casA).